Consider the following 242-residue polypeptide: Agamous-like MADS-box protein MADS4 (242 aa).

The MADS-box domain occupies 1 to 61 (MGRGRVELKR…GKLYEFCSSS (61 aa)). Positions 89–185 (ELSSQQEYLK…GTQVNQLQWN (97 aa)) constitute a K-box domain.

In terms of tissue distribution, expressed in flowers and seeds.

It is found in the nucleus. Its function is as follows. Probable transcription factor involved in flower development. This Vitis vinifera (Grape) protein is Agamous-like MADS-box protein MADS4.